We begin with the raw amino-acid sequence, 308 residues long: tRNA dimethylallyltransferase (308 aa).

17-24 (GPTGSGKS) is an ATP binding site. 19–24 (TGSGKS) lines the substrate pocket.

Belongs to the IPP transferase family. As to quaternary structure, monomer. It depends on Mg(2+) as a cofactor.

The catalysed reaction is adenosine(37) in tRNA + dimethylallyl diphosphate = N(6)-dimethylallyladenosine(37) in tRNA + diphosphate. Catalyzes the transfer of a dimethylallyl group onto the adenine at position 37 in tRNAs that read codons beginning with uridine, leading to the formation of N6-(dimethylallyl)adenosine (i(6)A). The chain is tRNA dimethylallyltransferase from Paenarthrobacter aurescens (strain TC1).